The sequence spans 308 residues: MKVIFAGTPDFAAAALRAVAAAGFEIPLVLTQPDRPKGRGMQLTAPPVKQAALELGLRVEQPEKLRNNAEALQMLKEVEADVMVVAAYGLILPQEVLDTPKHGCLNIHASLLPRWRGAAPIQRAIEAGDAETGVCIMQMDIGLDTGDVVSEHRYAIQPTDTANEVHDALMEIGAAAVVADLQQLQSKGRLNAVKQPEEGVTYAQKLSKEEARIDWSKSAAVIERKIRAFNPVPAAWVEYQGKPMKIRRAEVVAQQGAAGEVLSCSADGLVVACGENALKITELQPAGGRRMNIAAFAAGRHIEAGAKL.

Serine 110–proline 113 provides a ligand contact to (6S)-5,6,7,8-tetrahydrofolate.

The protein belongs to the Fmt family.

It carries out the reaction L-methionyl-tRNA(fMet) + (6R)-10-formyltetrahydrofolate = N-formyl-L-methionyl-tRNA(fMet) + (6S)-5,6,7,8-tetrahydrofolate + H(+). In terms of biological role, attaches a formyl group to the free amino group of methionyl-tRNA(fMet). The formyl group appears to play a dual role in the initiator identity of N-formylmethionyl-tRNA by promoting its recognition by IF2 and preventing the misappropriation of this tRNA by the elongation apparatus. The chain is Methionyl-tRNA formyltransferase from Neisseria meningitidis serogroup B (strain ATCC BAA-335 / MC58).